We begin with the raw amino-acid sequence, 114 residues long: T-cell leukemia/lymphoma protein 1A (114 aa).

Belongs to the TCL1 family. In terms of assembly, homodimer. Interacts with AKT1, AKT2 and AKT3 (via PH domain). Interacts with PNPT1; the interaction has no effect on PNPT1 exonuclease activity. Restricted in the T-cell lineage to immature thymocytes and activated peripheral lymphocytes. Preferentially expressed early in T- and B-lymphocyte differentiation.

Its subcellular location is the cytoplasm. It localises to the nucleus. The protein resides in the microsome. It is found in the endoplasmic reticulum. Its function is as follows. Enhances the phosphorylation and activation of AKT1, AKT2 and AKT3. Promotes nuclear translocation of AKT1. Enhances cell proliferation, stabilizes mitochondrial membrane potential and promotes cell survival. The polypeptide is T-cell leukemia/lymphoma protein 1A (TCL1A) (Homo sapiens (Human)).